The primary structure comprises 737 residues: Polyribonucleotide nucleotidyltransferase (737 aa).

Mg(2+)-binding residues include aspartate 489 and aspartate 495. One can recognise a KH domain in the interval 556-615 (PKIDTIKIDVDKIKIVIGKGGETIDKIIAETGVKIDIDEEGNVSIYSSDQDAINRAKEII). Residues 625-693 (DEVYRAKVVR…EKGRIDASMK (69 aa)) enclose the S1 motif domain. The disordered stretch occupies residues 691–737 (SMKALLPRPPKPEHDEKGEKSERPHRPRHHKDHKPKKEFTETPKDSE). Over residues 700 to 714 (PKPEHDEKGEKSERP) the composition is skewed to basic and acidic residues. The segment covering 715-724 (HRPRHHKDHK) has biased composition (basic residues). The segment covering 725-737 (PKKEFTETPKDSE) has biased composition (basic and acidic residues).

Belongs to the polyribonucleotide nucleotidyltransferase family. Mg(2+) serves as cofactor.

The protein resides in the cytoplasm. It carries out the reaction RNA(n+1) + phosphate = RNA(n) + a ribonucleoside 5'-diphosphate. Involved in mRNA degradation. Catalyzes the phosphorolysis of single-stranded polyribonucleotides processively in the 3'- to 5'-direction. This chain is Polyribonucleotide nucleotidyltransferase, found in Streptococcus pneumoniae (strain ATCC 700669 / Spain 23F-1).